The primary structure comprises 422 residues: Putative nickel insertion protein (422 aa).

The protein belongs to the LarC family.

The protein is Putative nickel insertion protein of Synechocystis sp. (strain ATCC 27184 / PCC 6803 / Kazusa).